Consider the following 383-residue polypeptide: Acetylornithine deacetylase (383 aa).

His-80 contacts Zn(2+). Residue Asp-82 is part of the active site. A Zn(2+)-binding site is contributed by Asp-112. Glu-144 is an active-site residue. Zn(2+)-binding residues include Glu-145, Glu-169, and His-355.

It belongs to the peptidase M20A family. ArgE subfamily. Homodimer. It depends on Zn(2+) as a cofactor. Requires Co(2+) as cofactor. Glutathione serves as cofactor.

The protein resides in the cytoplasm. The enzyme catalyses N(2)-acetyl-L-ornithine + H2O = L-ornithine + acetate. Its pathway is amino-acid biosynthesis; L-arginine biosynthesis; L-ornithine from N(2)-acetyl-L-ornithine (linear): step 1/1. Functionally, catalyzes the hydrolysis of the amide bond of N(2)-acetylated L-amino acids. Cleaves the acetyl group from N-acetyl-L-ornithine to form L-ornithine, an intermediate in L-arginine biosynthesis pathway, and a branchpoint in the synthesis of polyamines. The sequence is that of Acetylornithine deacetylase from Escherichia coli (strain SMS-3-5 / SECEC).